A 614-amino-acid chain; its full sequence is NEDD8 ultimate buster 1 (614 aa).

Coiled coils occupy residues 36–71 and 151–206; these read LAVK…IERG and NVKA…MVVD. UBA domains are found at residues 373-413, 423-469, and 488-528; these read YIDP…ISNR, EEKE…LLSN, and SPSQ…LAHH. Residues 413 to 430 carry the Nuclear localization signal motif; the sequence is RREELAQIRKEEKEKRRR. The segment at 426-473 is NEDD8-binding 1; it reads EKRRRRLENVNTLRGMGYSTQAAKQALHQARGNLDDALKVLLSNPHMW. Residues 531-590 form a disordered region; sequence SLPPDLQFSGEDSSPTPSTSPSDSAGTSSASTDEDMETEAVNEILEDIPEHEEDYLDSTL. Positions 539 to 561 are enriched in low complexity; sequence SGEDSSPTPSTSPSDSAGTSSAS. An NEDD8-binding 2 region spans residues 549–597; the sequence is TSPSDSAGTSSASTDEDMETEAVNEILEDIPEHEEDYLDSTLEDEEVII. Positions 562–590 are enriched in acidic residues; that stretch reads TDEDMETEAVNEILEDIPEHEEDYLDSTL.

Directly interacts with NEDD8 and PSMD4/S5a, a member of the regulatory subunit of the 26S proteasome. Interacts with AIPL1. The interaction with UBD via UBA domains facilitates the linking of UBD-conjugated target protein to the proteasome complex and accelerates UBD degradation and that of its conjugates.

It localises to the nucleus. In terms of biological role, specific down-regulator of the NEDD8 conjugation system. Recruits NEDD8, UBD, and their conjugates to the proteasome for degradation. The polypeptide is NEDD8 ultimate buster 1 (Nub1) (Mus musculus (Mouse)).